The primary structure comprises 197 residues: Putative peptidyl-prolyl cis-trans isomerase (197 aa).

One can recognise a PPIase cyclophilin-type domain in the interval 14-195; sequence NEIKVVMHTN…YDVVIESIDV (182 aa).

Belongs to the cyclophilin-type PPIase family.

The enzyme catalyses [protein]-peptidylproline (omega=180) = [protein]-peptidylproline (omega=0). Its function is as follows. PPIases accelerate the folding of proteins. It catalyzes the cis-trans isomerization of proline imidic peptide bonds in oligopeptides. The sequence is that of Putative peptidyl-prolyl cis-trans isomerase from Staphylococcus epidermidis (strain ATCC 35984 / DSM 28319 / BCRC 17069 / CCUG 31568 / BM 3577 / RP62A).